The sequence spans 296 residues: Protoheme IX farnesyltransferase (296 aa).

Residues 1-9 (MMFKQYLQV) lie on the Cytoplasmic side of the membrane. A helical transmembrane segment spans residues 10–28 (TKPGIIFGNLISVIGGFLL). The Periplasmic segment spans residues 29–37 (ASKGSIDYP). Residues 38 to 56 (LFIYTLVGVSLVVASGCVF) traverse the membrane as a helical segment. At 57–78 (NNYIDRDIDRKMERTKNRVLVK) the chain is on the cytoplasmic side. The chain crosses the membrane as a helical span at residues 79 to 97 (GLISPAVSLVYATLLGIAG). The Periplasmic segment spans residues 98-107 (FMLLWFGANP). A helical membrane pass occupies residues 108–126 (LACWLGVMGFVVYVGVYSL). Residues 127-197 (YMKRHSVYGT…YQAANIPVLP (71 aa)) lie on the Cytoplasmic side of the membrane. Residues 198–216 (VVKGISVAKNHITLYIIAF) form a helical membrane-spanning segment. Over 217-228 (AVATLMLSLGGY) the chain is Periplasmic. Residues 229-247 (AGYKYLVVAAAVSVWWLGM) traverse the membrane as a helical segment. The Cytoplasmic segment spans residues 248–268 (ALRGYKVADDRIWARKLFGFS). Residues 269-287 (IIAITALSVMMSVDFMVPD) traverse the membrane as a helical segment. Topologically, residues 288–296 (SHTLLAAVW) are periplasmic.

Belongs to the UbiA prenyltransferase family. Protoheme IX farnesyltransferase subfamily.

The protein localises to the cell inner membrane. The catalysed reaction is heme b + (2E,6E)-farnesyl diphosphate + H2O = Fe(II)-heme o + diphosphate. The protein operates within porphyrin-containing compound metabolism; heme O biosynthesis; heme O from protoheme: step 1/1. Functionally, converts heme B (protoheme IX) to heme O by substitution of the vinyl group on carbon 2 of heme B porphyrin ring with a hydroxyethyl farnesyl side group. This is Protoheme IX farnesyltransferase from Shigella flexneri.